Consider the following 206-residue polypeptide: Sec-independent protein translocase protein TatB (206 aa).

A helical membrane pass occupies residues 1–21 (MFDIGWTELLVIAVVLIVVVG). Residues 104–206 (ENKTEVPSAA…VQTKKKKDEA (103 aa)) are disordered. Residues 110–124 (PSAAMSAPTPSMSLP) show a composition bias toward low complexity. Over residues 125-138 (ETPPVVPTPAPAPE) the composition is skewed to pro residues. Composition is skewed to low complexity over residues 139-151 (PAAV…AAKP) and 187-196 (ARKPAAPKTP).

Belongs to the TatB family. The Tat system comprises two distinct complexes: a TatABC complex, containing multiple copies of TatA, TatB and TatC subunits, and a separate TatA complex, containing only TatA subunits. Substrates initially bind to the TatABC complex, which probably triggers association of the separate TatA complex to form the active translocon.

The protein resides in the cell inner membrane. Part of the twin-arginine translocation (Tat) system that transports large folded proteins containing a characteristic twin-arginine motif in their signal peptide across membranes. Together with TatC, TatB is part of a receptor directly interacting with Tat signal peptides. TatB may form an oligomeric binding site that transiently accommodates folded Tat precursor proteins before their translocation. In Rhizobium etli (strain ATCC 51251 / DSM 11541 / JCM 21823 / NBRC 15573 / CFN 42), this protein is Sec-independent protein translocase protein TatB.